Reading from the N-terminus, the 580-residue chain is Fumarate hydratase class I, aerobic (580 aa).

3 residues coordinate [4Fe-4S] cluster: cysteine 105, cysteine 224, and cysteine 318.

The protein belongs to the class-I fumarase family. In terms of assembly, homodimer. The cofactor is [4Fe-4S] cluster.

It catalyses the reaction (S)-malate = fumarate + H2O. It carries out the reaction oxaloacetate = enol-oxaloacetate. It participates in carbohydrate metabolism; tricarboxylic acid cycle; (S)-malate from fumarate: step 1/1. Functionally, catalyzes the reversible hydration of fumarate to (S)-malate. Functions as an aerobic enzyme in the direction of malate formation as part of the citric acid cycle. Accounts for about 80% of the fumarase activity when the bacteria grow aerobically. To a lesser extent, also displays D-tartrate dehydratase activity in vitro, but is not able to convert (R)-malate, L-tartrate or meso-tartrate. Can also catalyze the isomerization of enol- to keto-oxaloacetate. The sequence is that of Fumarate hydratase class I, aerobic from Salmonella typhimurium (strain LT2 / SGSC1412 / ATCC 700720).